We begin with the raw amino-acid sequence, 625 residues long: DNA-directed RNA polymerase subunit gamma (625 aa).

The Zn(2+) site is built by cysteine 71, cysteine 73, cysteine 86, and cysteine 89. Mg(2+) is bound by residues aspartate 467, aspartate 469, and aspartate 471.

The protein belongs to the RNA polymerase beta' chain family. RpoC1 subfamily. In terms of assembly, in cyanobacteria the RNAP catalytic core is composed of 2 alpha, 1 beta, 1 beta', 1 gamma and 1 omega subunit. When a sigma factor is associated with the core the holoenzyme is formed, which can initiate transcription. Requires Mg(2+) as cofactor. The cofactor is Zn(2+).

The enzyme catalyses RNA(n) + a ribonucleoside 5'-triphosphate = RNA(n+1) + diphosphate. DNA-dependent RNA polymerase catalyzes the transcription of DNA into RNA using the four ribonucleoside triphosphates as substrates. The chain is DNA-directed RNA polymerase subunit gamma from Trichormus variabilis (strain ATCC 29413 / PCC 7937) (Anabaena variabilis).